The chain runs to 49 residues: Small, acid-soluble spore protein O (49 aa).

A disordered region spans residues 23-49 (AGYNEKFSNEPLTEAQRQNNKKRKKNQ).

This sequence belongs to the SspO family.

The protein resides in the spore core. This Geobacillus thermodenitrificans (strain NG80-2) protein is Small, acid-soluble spore protein O.